The following is a 369-amino-acid chain: Protein disulfide-isomerase erp38 (369 aa).

Residues 1–18 (MVLLKSLVVASLAAAVAA) form the signal peptide. 2 Thioredoxin domains span residues 19-130 (KSAV…EKTG) and 131-251 (VKAR…EKAG). Catalysis depends on nucleophile residues Cys-50, Cys-53, Cys-170, and Cys-173. 2 cysteine pairs are disulfide-bonded: Cys-50-Cys-53 and Cys-170-Cys-173. A Prevents secretion from ER motif is present at residues 366 to 369 (KEEL).

This sequence belongs to the protein disulfide isomerase family.

The protein localises to the endoplasmic reticulum lumen. It carries out the reaction Catalyzes the rearrangement of -S-S- bonds in proteins.. The sequence is that of Protein disulfide-isomerase erp38 (erp38) from Neurospora crassa (strain ATCC 24698 / 74-OR23-1A / CBS 708.71 / DSM 1257 / FGSC 987).